A 344-amino-acid polypeptide reads, in one-letter code: tRNA N6-adenosine threonylcarbamoyltransferase (344 aa).

Residues H111 and H115 each contribute to the Fe cation site. Substrate-binding positions include 134–138, D167, G180, and N273; that span reads LVSGG. Fe cation is bound at residue D301.

Belongs to the KAE1 / TsaD family. Fe(2+) is required as a cofactor.

The protein localises to the cytoplasm. It catalyses the reaction L-threonylcarbamoyladenylate + adenosine(37) in tRNA = N(6)-L-threonylcarbamoyladenosine(37) in tRNA + AMP + H(+). Required for the formation of a threonylcarbamoyl group on adenosine at position 37 (t(6)A37) in tRNAs that read codons beginning with adenine. Is involved in the transfer of the threonylcarbamoyl moiety of threonylcarbamoyl-AMP (TC-AMP) to the N6 group of A37, together with TsaE and TsaB. TsaD likely plays a direct catalytic role in this reaction. The chain is tRNA N6-adenosine threonylcarbamoyltransferase from Cupriavidus necator (strain ATCC 17699 / DSM 428 / KCTC 22496 / NCIMB 10442 / H16 / Stanier 337) (Ralstonia eutropha).